We begin with the raw amino-acid sequence, 108 residues long: ATP synthase subunit H, mitochondrial (108 aa).

A mitochondrion-targeting transit peptide spans 1–19 (MFTLRAASRRAFSTSIARR). Disordered stretches follow at residues 40–60 (AKDA…KPPV) and 75–108 (APVD…GVAV). The span at 47–60 (VKPWSAPSAPKPPV) shows a compositional bias: low complexity. A compositionally biased stretch (polar residues) spans 81–92 (GQTNSKSASPQA). Residues 93–108 (NDEDWLAFEEEEGVAV) are compositionally biased toward acidic residues.

As to quaternary structure, F-type ATP synthases have 2 components, the catalytic core F(1) and the membrane-embedded component F(0), linked together by a central stalk and a peripheral stalk. The central stalk, also called rotor shaft, is often seen as part of F(1). The peripheral stalk is seen as part of F(0). F(0) contains the membrane channel next to the rotor. F-type ATP synthases form dimers but each monomer functions independently in ATP generation. The dimer consists of 17 different polypeptides: ATP1 (subunit alpha, 3 molecules per monomer, part of F(1)), ATP2 (subunit beta, 3 copies per monomer, part of F(1)), ATP3 (subunit gamma, part of the central stalk), ATP4 (subunit b, part of the peripheral stalk), ATP5/OSCP (subunit 5/OSCP, part of the peripheral stalk), ATP6 (subunit a, part of the peripheral stalk), ATP7 (subunit d, part of the peripheral stalk), ATP8 (subunit 8, part of the peripheral stalk), OLI1 (subunit c, part of the rotor, 10 molecules per monomer), ATP14 (subunit H, part of the peripheral stalk), ATP15 (subunit epsilon, part of the central stalk), ATP16 (subunit delta, part of the central stalk), ATP17 (subunit f, part of the peripheral stalk), ATP18 (subunit i/j, part of the peripheral stalk), ATP19 (subunit k, dimer-specific, at interface between monomers), ATP20 (subunit g, at interface between monomers), TIM11 (subunit e, at interface between monomers).

The protein localises to the mitochondrion inner membrane. In terms of biological role, mitochondrial membrane ATP synthase (F(1)F(0) ATP synthase or Complex V) produces ATP from ADP in the presence of a proton gradient across the membrane which is generated by electron transport complexes of the respiratory chain. F-type ATP synthases consist of two structural domains, F(1) - containing the extramembraneous catalytic core, and F(0) - containing the membrane proton channel, linked together by a central stalk and a peripheral stalk. During catalysis, ATP synthesis in the catalytic domain of F(1) is coupled via a rotary mechanism of the central stalk subunits to proton translocation. Part of the peripheral stalk. The chain is ATP synthase subunit H, mitochondrial from Yarrowia lipolytica (strain CLIB 122 / E 150) (Yeast).